Consider the following 170-residue polypeptide: Histone H1.9 (170 aa).

In terms of domain architecture, H15 spans 34 to 108; that stretch reads RKPTMSYVIL…GASGSLCLCK (75 aa). S56 bears the Phosphoserine mark. Positions 118–140 are disordered; the sequence is AKRCQDRQKSQKPQKPGQRESEP.

It belongs to the histone H1/H5 family. Expressed exclusively in the testis by haploid germ cells (at protein level).

The protein localises to the nucleus. It is found in the chromosome. Its function is as follows. DNA-binding protein that may be implicated in chromatin remodeling and/or transcriptional regulation during spermiogenesis, the process of spermatid maturation into spermatozoa. In Mus musculus (Mouse), this protein is Histone H1.9.